The following is a 236-amino-acid chain: Small ribosomal subunit protein uS2c (236 aa).

The protein belongs to the universal ribosomal protein uS2 family.

It localises to the plastid. Its subcellular location is the chloroplast. In Ipomoea purpurea (Common morning glory), this protein is Small ribosomal subunit protein uS2c (rps2).